A 234-amino-acid polypeptide reads, in one-letter code: UPF0758 protein Smlt0399 (234 aa).

The MPN domain occupies 103-225 (VGNNPAAVGR…PVSFAERGLL (123 aa)). 3 residues coordinate Zn(2+): His-174, His-176, and Asp-187. The JAMM motif signature appears at 174 to 187 (HNHPSGDPEPSSAD).

It belongs to the UPF0758 family.

The polypeptide is UPF0758 protein Smlt0399 (Stenotrophomonas maltophilia (strain K279a)).